We begin with the raw amino-acid sequence, 425 residues long: Histidine--tRNA ligase (425 aa).

It belongs to the class-II aminoacyl-tRNA synthetase family. As to quaternary structure, homodimer.

It localises to the cytoplasm. It carries out the reaction tRNA(His) + L-histidine + ATP = L-histidyl-tRNA(His) + AMP + diphosphate + H(+). This is Histidine--tRNA ligase from Shewanella sp. (strain ANA-3).